Consider the following 329-residue polypeptide: Protein-arginine N-acetylglucosaminyltransferase NleB1 (329 aa).

A glycan (N-beta-linked (GlcNAc) arginine; by autocatalysis) is linked at Arg-13. 48-50 is a UDP-N-acetyl-alpha-D-glucosamine binding site; it reads QWF. A glycan (N-beta-linked (GlcNAc) arginine; by autocatalysis) is linked at Arg-53. Residue Tyr-72 coordinates UDP-N-acetyl-alpha-D-glucosamine. N-beta-linked (GlcNAc) arginine; by autocatalysis glycosylation is present at Arg-159. 219 to 222 serves as a coordination point for UDP-N-acetyl-alpha-D-glucosamine; that stretch reads YLDA. The DXD motif motif lies at 221-223; sequence DAD. Mn(2+) is bound at residue Asp-223. Glu-253 acts as the Proton acceptor in catalysis. N-beta-linked (GlcNAc) arginine; by autocatalysis glycosylation occurs at Arg-293. The Mn(2+) site is built by Asn-320 and Ser-322. UDP-N-acetyl-alpha-D-glucosamine is bound by residues Ser-322 and 327–329; that span reads SSW.

It belongs to the glycosyltransferase NleB family. The cofactor is Mn(2+). Auto-glycosylated: arginine GlcNAcylation is required for activity toward death domain-containing host target proteins.

The protein localises to the secreted. It localises to the host cytoplasm. It catalyses the reaction L-arginyl-[protein] + UDP-N-acetyl-alpha-D-glucosamine = N(omega)-(N-acetyl-beta-D-glucosaminyl)-L-arginyl-[protein] + UDP + H(+). Its function is as follows. Protein-arginine N-acetylglucosaminyltransferase effector that disrupts TNF signaling in infected cells, including NF-kappa-B signaling, apoptosis and necroptosis. Acts by catalyzing the transfer of a single N-acetylglucosamine (GlcNAc) to a conserved arginine residue in the death domain of host proteins FADD, TRADD, FAS, TNFRSF1A/TNFR1, TNFRSF25/DR3 and RIPK1: arginine GlcNAcylation prevents homotypic/heterotypic death domain interactions and assembly of the oligomeric TNF-alpha receptor complex, thereby disrupting TNF signaling. Has preference for host FADD as substrate compared to other death domain-containing proteins. Also acts on host proteins without a death domain: catalyzes arginine GlcNAcylation of HIF1A, thereby regulating host glucose metabolism. Also displays intra-bacterial activity by mediating GlcNAcylation of glutathione synthetase GshB. Catalyzes auto-GlcNAcylation, which is required for activity toward death domain-containing host target proteins. Shows a higher enzymatic activity than NleB2. The protein is Protein-arginine N-acetylglucosaminyltransferase NleB1 of Escherichia coli O127:H6 (strain E2348/69 / EPEC).